We begin with the raw amino-acid sequence, 79 residues long: Putative transmembrane protein ORF17 (79 aa).

Transmembrane regions (helical) follow at residues 8 to 28 (LMIY…IMYY) and 50 to 70 (VFVM…TTTI).

It localises to the host membrane. The chain is Putative transmembrane protein ORF17 from Haloarcula hispanica (His1V).